A 428-amino-acid chain; its full sequence is UPF0597 protein PBPRB0240 (428 aa).

Belongs to the UPF0597 family.

The sequence is that of UPF0597 protein PBPRB0240 from Photobacterium profundum (strain SS9).